A 3746-amino-acid polypeptide reads, in one-letter code: N-(5-amino-5-carboxypentanoyl)-L-cysteinyl-D-valine synthase (3746 aa).

Residues 299-711 (EEVVERHEDK…GRADFQIKLR (413 aa)) are adenylation (A) domain 1. Residues 818–895 (DLRGDTEIAL…RMADLLQNKQ (78 aa)) enclose the Carrier 1 domain. Serine 855 bears the O-(pantetheine 4'-phosphoryl)serine mark. The tract at residues 918 to 1372 (NIYLANSLQQ…YLSSIQLEQL (455 aa)) is condensation (C) domain 1. The interval 1391-1801 (FENEASQKPD…GRNDFQVKIR (411 aa)) is adenylation (A) domain 2. A Carrier 2 domain is found at 1902-1979 (PPRSEIERSL…AQTHLILNDA (78 aa)). The residue at position 1939 (serine 1939) is an O-(pantetheine 4'-phosphoryl)serine. The tract at residues 1994-2434 (QMIPVSRAQE…SELSAEGINE (441 aa)) is condensation (C) domain 2. Residues 2478 to 2883 (AFLAAEKIAV…GRGDLQIKMR (406 aa)) are adenylation (A) domain 3. One can recognise a Carrier 3 domain in the interval 2991-3066 (PPRNIIEAKM…ALHDHVFMKD (76 aa)). Serine 3026 bears the O-(pantetheine 4'-phosphoryl)serine mark. The tract at residues 3084 to 3500 (GEAPLLPIQD…NKILDGRASQ (417 aa)) is epimerase (E) domain. The segment at 3530–3732 (TLFLLPPGEG…FSWVGNPQQV (203 aa)) is thioesterase (TE) domain.

Belongs to the NRP synthetase family. Requires pantetheine 4'-phosphate as cofactor. Mg(2+) is required as a cofactor.

Its subcellular location is the cytoplasm. It is found in the cytosol. The protein localises to the vacuole membrane. It carries out the reaction L-2-aminoadipate + L-valine + L-cysteine + 3 ATP + H2O = N-[(5S)-5-amino-5-carboxypentanoyl]-L-cysteinyl-D-valine + 3 AMP + 3 diphosphate + 3 H(+). It participates in antibiotic biosynthesis; penicillin G biosynthesis; penicillin G from L-alpha-aminoadipate and L-cysteine and L-valine: step 1/3. Functionally, nonribosomal peptide synthetase; part of the gene cluster that mediates the biosynthesis of penicillin, the world's most important antibiotic. The trimodular NRPS acvA produces the tripeptide N-[(5S)-5-amino-5-carboxypentanoyl]-L-cysteinyl-D-valine (LLD-ACV or ACV) via condensation of the 3 residues L-2-aminoadipate, L-cysteine and L-valine. The precursor amino acids for penicillin biosynthesis are withdrawn from the vacuolar amino acid pool by the MFS-type transporter penV. Each of the constituent amino acids of the tripeptide ACV are activated as aminoacyl-adenylates with peptide bonds formed through the participation of amino acid thioester intermediates. The penicillin biosynthesis occurs via 3 enzymatic steps, the first corresponding to the production of the tripeptide N-[(5S)-5-amino-5-carboxypentanoyl]-L-cysteinyl-D-valine (LLD-ACV or ACV) by the NRPS acvA. The tripeptide ACV is then cyclized to isopenicillin N (IPN) by the isopenicillin N synthase ipnA that forms the beta-lactam nucleus. Finally, the alpha-aminoadipyl side chain is exchanged for phenylacetic acid by the isopenicillin N acyltransferase aatA to yield penicillin in the peroxisomal matrix. This Penicillium chrysogenum (Penicillium notatum) protein is N-(5-amino-5-carboxypentanoyl)-L-cysteinyl-D-valine synthase.